Here is a 126-residue protein sequence, read N- to C-terminus: Hydrogenase maturation factor HypA (126 aa).

Residue H2 participates in Ni(2+) binding. Zn(2+) is bound by residues C78, C81, C97, and C100.

Belongs to the HypA/HybF family.

In terms of biological role, involved in the maturation of [NiFe] hydrogenases. Required for nickel insertion into the metal center of the hydrogenase. The protein is Hydrogenase maturation factor HypA of Methanococcus maripaludis (strain C6 / ATCC BAA-1332).